A 297-amino-acid polypeptide reads, in one-letter code: MKRPDYRTLQALDAVIRERGFERAAQKLCITQSAVSQRIKQLENLFGQPLLVRTIPPRPTEQGQKLLALLHQVELLEEEWLGNETNSDIPLLLSLAVNADSLATWLLPALQPVLVDSPIRLNLQVEDETRTQERLRRGEVVGAVSIQSQPLPSCLVDKLGALDYLFVASPTFAARYFPNGVTRSALLRAPAVAFDHLDDMHQAFLQQNFDLSPGSVPCHIVNSSEAFVQLARQGTTCCMIPHLQIEKELANNELVDLTPGLFQRRMLYWHRFAPESRMMRKVTDALLAHGHQVLRQS.

The HTH lysR-type domain occupies 4–60 (PDYRTLQALDAVIRERGFERAAQKLCITQSAVSQRIKQLENLFGQPLLVRTIPPRPT). The H-T-H motif DNA-binding region spans 21–40 (FERAAQKLCITQSAVSQRIK).

Belongs to the LysR transcriptional regulatory family. In terms of assembly, homodimer.

Controls the transcription of genes involved in arginine and lysine metabolism. This Pectobacterium carotovorum subsp. carotovorum (strain PC1) protein is HTH-type transcriptional regulator ArgP.